A 206-amino-acid chain; its full sequence is Heat shock protein beta-1 (206 aa).

R12 bears the Omega-N-methylarginine mark. S13 bears the Phosphoserine mark. At S15 the chain carries Phosphoserine; by MAPKAPK2 and MAPKAPK3. At S27 the chain carries Phosphoserine. Positions 74–206 (RPAFSRALNR…GPESEQSGAK (133 aa)) are interaction with TGFB1I1. Positions 80-188 (ALNRQLSSGV…QSAEITIPVT (109 aa)) constitute a sHSP domain. Residue S86 is modified to Phosphoserine; by MAPKAPK2, MAPKAPK3 and MAPKAPK5. 3 positions are modified to phosphoserine: S87, S90, and S102. K127 carries the N6-acetyllysine modification. T178 carries the phosphothreonine modification. Residues S180 and S200 each carry the phosphoserine modification.

The protein belongs to the small heat shock protein (HSP20) family. As to quaternary structure, homooligomer. Homodimer; becomes monomeric upon activation. Heterooligomer; with HSPB6. Associates with alpha- and beta-tubulin. Interacts with TGFB1I1. Interacts with CRYAB. Interacts with HSPB8. Interacts with HSPBAP1. In terms of processing, phosphorylated upon exposure to protein kinase C activators and heat shock. Phosphorylation by MAPKAPK2 and MAPKAPK3 in response to stress dissociates HSPB1 from large small heat-shock protein (sHsps) oligomers and impairs its chaperone activity and ability to protect against oxidative stress effectively. Phosphorylation by MAPKAPK5 in response to PKA stimulation induces F-actin rearrangement. As to expression, expressed in a variety of tissues. High levels in lung, adrenal, xiphoid, adipose tissue, heart and striated and smooth muscle, lower levels in the CNS. Adult levels are much higher in the slow-twitch soleus muscle than in the fast-twitch rectus femoris and extensor digitorum muscles.

The protein resides in the cytoplasm. It localises to the nucleus. The protein localises to the cytoskeleton. Its subcellular location is the spindle. In terms of biological role, small heat shock protein which functions as a molecular chaperone probably maintaining denatured proteins in a folding-competent state. Plays a role in stress resistance and actin organization. Through its molecular chaperone activity may regulate numerous biological processes including the phosphorylation and the axonal transport of neurofilament proteins. The polypeptide is Heat shock protein beta-1 (Hspb1) (Rattus norvegicus (Rat)).